The sequence spans 325 residues: Acetyl-coenzyme A carboxylase carboxyl transferase subunit alpha (325 aa).

A CoA carboxyltransferase C-terminal domain is found at 44-298; the sequence is QLEARADQLR…KAAIQDNLQA (255 aa).

Belongs to the AccA family. As to quaternary structure, acetyl-CoA carboxylase is a heterohexamer composed of biotin carboxyl carrier protein (AccB), biotin carboxylase (AccC) and two subunits each of ACCase subunit alpha (AccA) and ACCase subunit beta (AccD).

The protein localises to the cytoplasm. The catalysed reaction is N(6)-carboxybiotinyl-L-lysyl-[protein] + acetyl-CoA = N(6)-biotinyl-L-lysyl-[protein] + malonyl-CoA. It participates in lipid metabolism; malonyl-CoA biosynthesis; malonyl-CoA from acetyl-CoA: step 1/1. Component of the acetyl coenzyme A carboxylase (ACC) complex. First, biotin carboxylase catalyzes the carboxylation of biotin on its carrier protein (BCCP) and then the CO(2) group is transferred by the carboxyltransferase to acetyl-CoA to form malonyl-CoA. The protein is Acetyl-coenzyme A carboxylase carboxyl transferase subunit alpha of Picosynechococcus sp. (strain ATCC 27264 / PCC 7002 / PR-6) (Agmenellum quadruplicatum).